The following is a 1183-amino-acid chain: MEQVLSSPQGCSEWEVNGKTEWESDQNPLGFLLVDKENSSVADPTNEIFQENAINLDDLFWASQTYSWENGLDCVYPEWKAQPPPSQDLKGDGNSGISQLVEGDLICFNSRSASPSLADRPVQDNNLYDHAEQVEVTATSSTLNVCTGELGINAPTLHTDKTLLQDTHLMLEESHLTNCEFSCNSGVENESQNFLSHGTRNILESEGLFAVSPVEVSCVDTNSNPKPTIVCQTPPLASEHIYLSSSALPCEPVFPMTCTKPHVPPYHAGSATLPMDEVEMMLPKLQGGEGESSKPSANNRTLEPQRLDANTDTTHLSVCPLGESDISPEHCEEMLHELSTKCTVEMVEEEVNKKSVSSNTTNTAFSKPKTELCEELSGCTLGVLLETVSGDVKEEAASDSRTDHVFPETQTDLAPVALIDSQAEDPSTESLPRKNGQEESKSALPVSTPEHNALFELSSGNVVLPEDHSQSTFSAQTQALSEVDHDGDLTPDGMLTDNIVCEAVTSIDSVILSLTDSFELPKLSDCDLSSHDFESHALTLEIQNNVTCVQTGSVDNNPEEMSTPFTCTDNQLTVTGGLAGLDLTETTSQSGEASGEGEAGLPVLPTHQEDFHQLTPSEINLAQEQQVSSVVPSSPPSHRDVFPCGASLDGEAYLTLMENNPDTLKHAEMTLDLCKASDALPTKSLQIAPVDLIHVPIVSATAPRSEEQSALRAVFQALDQDGDGFVHIEEFIEFAKAYGAEQVKDLTRFLDPSGLGVISFEDFHRGISAISNEESAYSECETFTDEDTTALVHPELHEDVETDSGIENTLTDGDDRNSPSSFPASFQNFLQSEALEFFCTHCHKQISRLEDLSTRLQLLEMNRHLQQSNNLDVMGDLTQDILDLADRDITDKVLLLEKRVCELEKDSLESEEQHARLRQENLTLVHRANALEEQLKEQELRTEEDLLAQTRKHRDALNKLQRERDLEIENLQARLHQLDEENSELRSCVPCLRANIERLEEEKRKLQDEADDITQRLNEESESRRKMSDKLSHERHTNQKEKECTQGLIEDLRKQLEHLQLFKLETEARRGRSSSNGLQEYNTHMRENELEQEIRRLKQDNRSLKEQNDELNGQIINLSIQGAKSLFTESLSESLAAEINNVSRAELMEAIHKQEEINFRLQDYIDRIIVAIMESNPSILEVK.

The disordered stretch occupies residues 423–448 (AEDPSTESLPRKNGQEESKSALPVST). The span at 431–441 (LPRKNGQEESK) shows a compositional bias: basic and acidic residues. 2 EF-hand domains span residues 706-741 (EEQS…YGAE) and 738-773 (YGAE…ISNE). The Ca(2+) site is built by Asp-719, Asp-721, Asp-723, Glu-730, Asp-751, Ser-753, and Asp-762. Residues 902-1121 (ELEKDSLESE…NGQIINLSIQ (220 aa)) are a coiled coil. The tract at residues 911–1015 (EEQHARLRQE…LQDEADDITQ (105 aa)) is ARF-binding domain (ABD). The tract at residues 1005–1044 (KLQDEADDITQRLNEESESRRKMSDKLSHERHTNQKEKEC) is disordered. Residues 1121-1183 (QGAKSLFTES…ESNPSILEVK (63 aa)) enclose the FIP-RBD domain.

The protein localises to the recycling endosome membrane. It is found in the cytoplasm. It localises to the cytoskeleton. Its subcellular location is the microtubule organizing center. The protein resides in the centrosome. The protein localises to the cleavage furrow. It is found in the midbody. It localises to the golgi apparatus membrane. Its subcellular location is the golgi apparatus. The protein resides in the trans-Golgi network membrane. Its function is as follows. Downstream effector molecule for Rab11 GTPase which acts as a regulator of endocytic trafficking, cytokinesis and intracellular ciliogenesis by participating in membrane delivery. This is Rab11 family-interacting protein 3 (rab11fip3) from Danio rerio (Zebrafish).